We begin with the raw amino-acid sequence, 663 residues long: Bifunctional polymyxin resistance protein ArnA (663 aa).

The segment at 1–307 (MSPKAVVFAY…EFGLVEGSQL (307 aa)) is formyltransferase ArnAFT. Histidine 106 functions as the Proton donor; for formyltransferase activity in the catalytic mechanism. Residues arginine 116 and 138–142 (VKRAD) contribute to the (6R)-10-formyltetrahydrofolate site. Residues 317–663 (RRTRVLILGV…EAMAEKADMR (347 aa)) are dehydrogenase ArnADH. Residues aspartate 350 and 371-372 (DI) each bind NAD(+). Residues alanine 396, tyrosine 401, and 435–436 (TS) contribute to the UDP-alpha-D-glucuronate site. Glutamate 437 (proton acceptor; for decarboxylase activity) is an active-site residue. Residues arginine 463, asparagine 494, 528–537 (RLVDGGAQKR), and tyrosine 615 each bind UDP-alpha-D-glucuronate. Arginine 621 functions as the Proton donor; for decarboxylase activity in the catalytic mechanism.

It in the N-terminal section; belongs to the Fmt family. UDP-L-Ara4N formyltransferase subfamily. The protein in the C-terminal section; belongs to the NAD(P)-dependent epimerase/dehydratase family. UDP-glucuronic acid decarboxylase subfamily. In terms of assembly, homohexamer, formed by a dimer of trimers.

It catalyses the reaction UDP-alpha-D-glucuronate + NAD(+) = UDP-beta-L-threo-pentopyranos-4-ulose + CO2 + NADH. The enzyme catalyses UDP-4-amino-4-deoxy-beta-L-arabinose + (6R)-10-formyltetrahydrofolate = UDP-4-deoxy-4-formamido-beta-L-arabinose + (6S)-5,6,7,8-tetrahydrofolate + H(+). It functions in the pathway nucleotide-sugar biosynthesis; UDP-4-deoxy-4-formamido-beta-L-arabinose biosynthesis; UDP-4-deoxy-4-formamido-beta-L-arabinose from UDP-alpha-D-glucuronate: step 1/3. It participates in nucleotide-sugar biosynthesis; UDP-4-deoxy-4-formamido-beta-L-arabinose biosynthesis; UDP-4-deoxy-4-formamido-beta-L-arabinose from UDP-alpha-D-glucuronate: step 3/3. Its pathway is bacterial outer membrane biogenesis; lipopolysaccharide biosynthesis. Bifunctional enzyme that catalyzes the oxidative decarboxylation of UDP-glucuronic acid (UDP-GlcUA) to UDP-4-keto-arabinose (UDP-Ara4O) and the addition of a formyl group to UDP-4-amino-4-deoxy-L-arabinose (UDP-L-Ara4N) to form UDP-L-4-formamido-arabinose (UDP-L-Ara4FN). The modified arabinose is attached to lipid A and is required for resistance to polymyxin and cationic antimicrobial peptides. This is Bifunctional polymyxin resistance protein ArnA from Pseudomonas savastanoi pv. phaseolicola (strain 1448A / Race 6) (Pseudomonas syringae pv. phaseolicola (strain 1448A / Race 6)).